The sequence spans 490 residues: GTPase Der (490 aa).

EngA-type G domains lie at proline 3–valine 166 and isoleucine 203–threonine 376. GTP contacts are provided by residues glycine 9–serine 16, aspartate 56–isoleucine 60, asparagine 118–aspartate 121, glycine 209–serine 216, aspartate 256–valine 260, and asparagine 321–aspartate 324. The KH-like domain occupies arginine 377 to glutamate 461.

It belongs to the TRAFAC class TrmE-Era-EngA-EngB-Septin-like GTPase superfamily. EngA (Der) GTPase family. Associates with the 50S ribosomal subunit.

In terms of biological role, GTPase that plays an essential role in the late steps of ribosome biogenesis. The sequence is that of GTPase Der from Salmonella gallinarum (strain 287/91 / NCTC 13346).